Here is a 469-residue protein sequence, read N- to C-terminus: 3-isopropylmalate dehydratase large subunit (469 aa).

Residues Cys347, Cys410, and Cys413 each coordinate [4Fe-4S] cluster.

This sequence belongs to the aconitase/IPM isomerase family. LeuC type 1 subfamily. Heterodimer of LeuC and LeuD. The cofactor is [4Fe-4S] cluster.

It carries out the reaction (2R,3S)-3-isopropylmalate = (2S)-2-isopropylmalate. Its pathway is amino-acid biosynthesis; L-leucine biosynthesis; L-leucine from 3-methyl-2-oxobutanoate: step 2/4. In terms of biological role, catalyzes the isomerization between 2-isopropylmalate and 3-isopropylmalate, via the formation of 2-isopropylmaleate. This Burkholderia lata (strain ATCC 17760 / DSM 23089 / LMG 22485 / NCIMB 9086 / R18194 / 383) protein is 3-isopropylmalate dehydratase large subunit.